The primary structure comprises 271 residues: Glutamate racemase (271 aa).

Substrate-binding positions include 10–11 (DS) and 42–43 (YG). The active-site Proton donor/acceptor is the Cys-73. 74–75 (NT) contributes to the substrate binding site. Cys-183 (proton donor/acceptor) is an active-site residue. 184 to 185 (TH) serves as a coordination point for substrate.

It belongs to the aspartate/glutamate racemases family.

It catalyses the reaction L-glutamate = D-glutamate. It participates in cell wall biogenesis; peptidoglycan biosynthesis. Provides the (R)-glutamate required for cell wall biosynthesis. The sequence is that of Glutamate racemase from Lactococcus lactis subsp. lactis (strain IL1403) (Streptococcus lactis).